The chain runs to 124 residues: Small ribosomal subunit protein bS6 (124 aa).

The disordered stretch occupies residues 101–124 (IMMKEVQREEARKSAQSDAPAVAA). Over residues 105–115 (EVQREEARKSA) the composition is skewed to basic and acidic residues.

Belongs to the bacterial ribosomal protein bS6 family.

Functionally, binds together with bS18 to 16S ribosomal RNA. In Polynucleobacter asymbioticus (strain DSM 18221 / CIP 109841 / QLW-P1DMWA-1) (Polynucleobacter necessarius subsp. asymbioticus), this protein is Small ribosomal subunit protein bS6.